A 367-amino-acid polypeptide reads, in one-letter code: tRNA-specific 2-thiouridylase MnmA (367 aa).

Residues 11–18 (GLSGGVDS) and L37 each bind ATP. The Nucleophile role is filled by C99. An intrachain disulfide couples C99 to C195. G123 is an ATP binding site. Residues 145-147 (KDQ) form an interaction with tRNA region. C195 serves as the catalytic Cysteine persulfide intermediate. The interaction with tRNA stretch occupies residues 304-305 (RY).

This sequence belongs to the MnmA/TRMU family.

Its subcellular location is the cytoplasm. It carries out the reaction S-sulfanyl-L-cysteinyl-[protein] + uridine(34) in tRNA + AH2 + ATP = 2-thiouridine(34) in tRNA + L-cysteinyl-[protein] + A + AMP + diphosphate + H(+). Its function is as follows. Catalyzes the 2-thiolation of uridine at the wobble position (U34) of tRNA, leading to the formation of s(2)U34. The polypeptide is tRNA-specific 2-thiouridylase MnmA (Chlorobium luteolum (strain DSM 273 / BCRC 81028 / 2530) (Pelodictyon luteolum)).